The primary structure comprises 696 residues: Glycine--tRNA ligase beta subunit (696 aa).

This sequence belongs to the class-II aminoacyl-tRNA synthetase family. In terms of assembly, tetramer of two alpha and two beta subunits.

The protein localises to the cytoplasm. It carries out the reaction tRNA(Gly) + glycine + ATP = glycyl-tRNA(Gly) + AMP + diphosphate. This is Glycine--tRNA ligase beta subunit from Oleidesulfovibrio alaskensis (strain ATCC BAA-1058 / DSM 17464 / G20) (Desulfovibrio alaskensis).